A 344-amino-acid polypeptide reads, in one-letter code: Photosystem II protein D1 (344 aa).

Threonine 2 is modified (N-acetylthreonine). Phosphothreonine is present on threonine 2. The next 3 helical transmembrane spans lie at 29-46 (YIGWFGCLMIPTLLTATS), 118-133 (HFFLGICAYMGREWEL), and 142-156 (WIAVAYSAPVAAATA). Residue histidine 118 coordinates chlorophyll a. A pheophytin a-binding site is contributed by tyrosine 126. Positions 170 and 189 each coordinate [CaMn4O5] cluster. A helical membrane pass occupies residues 197–218 (FHMLGVAGVFGGSLFSAMHGSL). Histidine 198 is a chlorophyll a binding site. A quinone is bound by residues histidine 215 and 264-265 (SF). Histidine 215 serves as a coordination point for Fe cation. Histidine 272 contributes to the Fe cation binding site. The chain crosses the membrane as a helical span at residues 274–288 (FLAAWPVIGIWFTAL). Positions 332, 333, 342, and 344 each coordinate [CaMn4O5] cluster.

This sequence belongs to the reaction center PufL/M/PsbA/D family. As to quaternary structure, PSII is composed of 1 copy each of membrane proteins PsbA, PsbB, PsbC, PsbD, PsbE, PsbF, PsbH, PsbI, PsbJ, PsbK, PsbL, PsbM, PsbT, PsbX, PsbY, PsbZ, Psb30/Ycf12, at least 3 peripheral proteins of the oxygen-evolving complex and a large number of cofactors. It forms dimeric complexes. The D1/D2 heterodimer binds P680, chlorophylls that are the primary electron donor of PSII, and subsequent electron acceptors. It shares a non-heme iron and each subunit binds pheophytin, quinone, additional chlorophylls, carotenoids and lipids. D1 provides most of the ligands for the Mn4-Ca-O5 cluster of the oxygen-evolving complex (OEC). There is also a Cl(-1) ion associated with D1 and D2, which is required for oxygen evolution. The PSII complex binds additional chlorophylls, carotenoids and specific lipids. is required as a cofactor. In terms of processing, tyr-161 forms a radical intermediate that is referred to as redox-active TyrZ, YZ or Y-Z.

Its subcellular location is the plastid. It localises to the chloroplast thylakoid membrane. The catalysed reaction is 2 a plastoquinone + 4 hnu + 2 H2O = 2 a plastoquinol + O2. Photosystem II (PSII) is a light-driven water:plastoquinone oxidoreductase that uses light energy to abstract electrons from H(2)O, generating O(2) and a proton gradient subsequently used for ATP formation. It consists of a core antenna complex that captures photons, and an electron transfer chain that converts photonic excitation into a charge separation. The D1/D2 (PsbA/PsbD) reaction center heterodimer binds P680, the primary electron donor of PSII as well as several subsequent electron acceptors. The protein is Photosystem II protein D1 of Pleurastrum terricola (Filamentous green alga).